Consider the following 768-residue polypeptide: Probable dipeptidyl peptidase 4 (768 aa).

The first 17 residues, 1–17 (MKLGKWSVLLLVGCTAA), serve as a signal peptide directing secretion. Asn-38, Asn-81, Asn-104, Asn-113, Asn-221, Asn-282, and Asn-468 each carry an N-linked (GlcNAc...) asparagine glycan. The active-site Charge relay system is Ser-616. An N-linked (GlcNAc...) asparagine glycan is attached at Asn-668. Catalysis depends on charge relay system residues Asp-693 and His-728.

It belongs to the peptidase S9B family.

The protein localises to the secreted. The catalysed reaction is Release of an N-terminal dipeptide, Xaa-Yaa-|-Zaa-, from a polypeptide, preferentially when Yaa is Pro, provided Zaa is neither Pro nor hydroxyproline.. Extracellular dipeptidyl-peptidase which removes N-terminal dipeptides sequentially from polypeptides having unsubstituted N-termini provided that the penultimate residue is proline. This chain is Probable dipeptidyl peptidase 4 (dpp4), found in Aspergillus clavatus (strain ATCC 1007 / CBS 513.65 / DSM 816 / NCTC 3887 / NRRL 1 / QM 1276 / 107).